The sequence spans 548 residues: Probable thiamine biosynthetic bifunctional enzyme, chloroplastic (548 aa).

Residues 1–10 (MAAAPQQSVH) show a composition bias toward polar residues. Residues 1-40 (MAAAPQQSVHPSLPSSTSTLRLLISSSPRRPPPPPPRARR) form a disordered region. The N-terminal 47 residues, 1 to 47 (MAAAPQQSVHPSLPSSTSTLRLLISSSPRRPPPPPPRARRYNRLAAS), are a transit peptide targeting the chloroplast. Low complexity predominate over residues 11-28 (PSLPSSTSTLRLLISSSP). Residues 372–376 (QLREK) and N404 contribute to the 4-amino-2-methyl-5-(diphosphooxymethyl)pyrimidine site. Positions 405 and 424 each coordinate Mg(2+). Residue S443 participates in 4-amino-2-methyl-5-(diphosphooxymethyl)pyrimidine binding. Position 469–471 (469–471 (TST)) interacts with 2-[(2R,5Z)-2-carboxy-4-methylthiazol-5(2H)-ylidene]ethyl phosphate. K472 contributes to the 4-amino-2-methyl-5-(diphosphooxymethyl)pyrimidine binding site. 2-[(2R,5Z)-2-carboxy-4-methylthiazol-5(2H)-ylidene]ethyl phosphate-binding positions include G499 and 522-523 (VS).

It belongs to the thiamine-phosphate synthase family. Requires Mg(2+) as cofactor.

It localises to the plastid. Its subcellular location is the chloroplast. It catalyses the reaction 2-[(2R,5Z)-2-carboxy-4-methylthiazol-5(2H)-ylidene]ethyl phosphate + 4-amino-2-methyl-5-(diphosphooxymethyl)pyrimidine + 2 H(+) = thiamine phosphate + CO2 + diphosphate. The enzyme catalyses 2-(2-carboxy-4-methylthiazol-5-yl)ethyl phosphate + 4-amino-2-methyl-5-(diphosphooxymethyl)pyrimidine + 2 H(+) = thiamine phosphate + CO2 + diphosphate. It carries out the reaction 4-methyl-5-(2-phosphooxyethyl)-thiazole + 4-amino-2-methyl-5-(diphosphooxymethyl)pyrimidine + H(+) = thiamine phosphate + diphosphate. The catalysed reaction is 4-amino-5-hydroxymethyl-2-methylpyrimidine + ATP = 4-amino-2-methyl-5-(phosphooxymethyl)pyrimidine + ADP + H(+). It functions in the pathway cofactor biosynthesis; thiamine diphosphate biosynthesis; thiamine phosphate from 4-amino-2-methyl-5-diphosphomethylpyrimidine and 4-methyl-5-(2-phosphoethyl)-thiazole: step 1/1. Its pathway is cofactor biosynthesis; thiamine diphosphate biosynthesis; 4-amino-2-methyl-5-diphosphomethylpyrimidine from 5-amino-1-(5-phospho-D-ribosyl)imidazole: step 2/3. Functionally, essential for thiamine biosynthesis. Bifunctional enzyme that catalyzes the phosphorylation of hydroxymethylpyrimidine phosphate (HMP-P) to HMP-PP and condenses 4-methyl-5-(beta-hydroxyethyl)thiazole monophosphate (THZ-P) and 2-methyl-4-amino-5-hydroxymethyl pyrimidine pyrophosphate (HMP-PP) to form thiamine monophosphate (TMP). The sequence is that of Probable thiamine biosynthetic bifunctional enzyme, chloroplastic from Oryza sativa subsp. japonica (Rice).